We begin with the raw amino-acid sequence, 193 residues long: Protein Syd (193 aa).

It belongs to the Syd family.

Its subcellular location is the cell inner membrane. In terms of biological role, interacts with the SecY protein in vivo. May bind preferentially to an uncomplexed state of SecY, thus functioning either as a chelating agent for excess SecY in the cell or as a regulatory factor that negatively controls the translocase function. This Tolumonas auensis (strain DSM 9187 / NBRC 110442 / TA 4) protein is Protein Syd.